We begin with the raw amino-acid sequence, 348 residues long: Alpha-2-HS-glycoprotein (348 aa).

The first 18 residues, 1 to 18, serve as a signal peptide directing secretion; that stretch reads MKTLVLLLCFTLLWGCQS. Residues 19–133 form the Cystatin fetuin-A-type 1 domain; sequence APQGTGLGFR…QFSVMHTKCH (115 aa). Intrachain disulfides connect C32-C339, C89-C100, C114-C132, C146-C149, C208-C219, and C230-C247. Residue N99 is glycosylated (N-linked (GlcNAc...) asparagine). Residues S134 and S138 each carry the phosphoserine modification. Positions 144–255 constitute a Cystatin fetuin-A-type 2 domain; that stretch reads KVCPHCALLT…TCTAFPTQAN (112 aa). 2 N-linked (GlcNAc...) asparagine glycosylation sites follow: N156 and N176. A phosphoserine mark is found at S307, S311, S314, and S316.

This sequence belongs to the fetuin family. Post-translationally, phosphorylated by FAM20C in the extracellular medium. As to expression, expressed by the liver and secreted in plasma.

The protein resides in the secreted. This chain is Alpha-2-HS-glycoprotein (AHSG), found in Meriones unguiculatus (Mongolian jird).